Reading from the N-terminus, the 260-residue chain is Putative ATP-binding protein BAB2_1147 (260 aa).

The 224-residue stretch at 5 to 228 (ISFNNVVMRY…DLPYPRTEAI (224 aa)) folds into the ABC transporter domain. Residue 37-44 (GPSGCGKS) participates in ATP binding.

The protein belongs to the ABC transporter superfamily. As to quaternary structure, the complex is composed of two ATP-binding proteins (BAB2_1147), two transmembrane proteins (BAB2_1148) and a solute-binding protein (BAB2_1146).

The protein localises to the cell inner membrane. In terms of biological role, probably part of an ABC transporter complex. Probably Responsible for energy coupling to the transport system. The chain is Putative ATP-binding protein BAB2_1147 from Brucella abortus (strain 2308).